The sequence spans 435 residues: Adenylosuccinate synthetase (435 aa).

Residues 13–19 (GDEGKGK) and 41–43 (GHT) contribute to the GTP site. Aspartate 14 functions as the Proton acceptor in the catalytic mechanism. Aspartate 14 and glycine 41 together coordinate Mg(2+). IMP is bound by residues 14–17 (DEGK), 39–42 (NAGH), threonine 131, arginine 145, glutamine 226, threonine 241, and arginine 309. Catalysis depends on histidine 42, which acts as the Proton donor. A substrate-binding site is contributed by 305–311 (TVTGRKR). Residues arginine 311, 337–339 (KLD), and 419–421 (STG) contribute to the GTP site.

This sequence belongs to the adenylosuccinate synthetase family. Homodimer. It depends on Mg(2+) as a cofactor.

The protein resides in the cytoplasm. It carries out the reaction IMP + L-aspartate + GTP = N(6)-(1,2-dicarboxyethyl)-AMP + GDP + phosphate + 2 H(+). It participates in purine metabolism; AMP biosynthesis via de novo pathway; AMP from IMP: step 1/2. Plays an important role in the de novo pathway of purine nucleotide biosynthesis. Catalyzes the first committed step in the biosynthesis of AMP from IMP. The protein is Adenylosuccinate synthetase of Dechloromonas aromatica (strain RCB).